The chain runs to 94 residues: Integration host factor subunit beta (94 aa).

Belongs to the bacterial histone-like protein family. As to quaternary structure, heterodimer of an alpha and a beta chain.

Functionally, this protein is one of the two subunits of integration host factor, a specific DNA-binding protein that functions in genetic recombination as well as in transcriptional and translational control. This Haemophilus influenzae (strain PittGG) protein is Integration host factor subunit beta.